Consider the following 60-residue polypeptide: Large ribosomal subunit protein uL30 (60 aa).

It belongs to the universal ribosomal protein uL30 family. In terms of assembly, part of the 50S ribosomal subunit.

The protein is Large ribosomal subunit protein uL30 of Bacillus mycoides (strain KBAB4) (Bacillus weihenstephanensis).